A 100-amino-acid chain; its full sequence is uncharacterized protein (100 aa).

It localises to the mitochondrion. This is an uncharacterized protein from Arabidopsis thaliana (Mouse-ear cress).